We begin with the raw amino-acid sequence, 161 residues long: Alpha-crystallin A chain (161 aa).

Residues 1–51 are required for complex formation with BFSP1 and BFSP2; that stretch reads ALGPFYPSRXXXXXXXXXXXXXXXXXXXXXXXXXXXXQSLFRTVLDSGISE. The residue at position 38 (glutamine 38) is a Deamidated glutamine; partial. The region spanning 40-150 is the sHSP domain; the sequence is LFRTVLDSGI…SHSERAIPVS (111 aa). Lysine 87 is modified (N6-acetyllysine). Zn(2+) is bound at residue histidine 88. Position 89 is a deamidated asparagine; partial (asparagine 89). 2 residues coordinate Zn(2+): glutamate 90 and histidine 95. Serine 110 bears the Phosphoserine mark. Deamidated asparagine; partial is present on asparagine 111. A disulfide bond links cysteine 119 and cysteine 130. Glutamine 135 carries the deamidated glutamine; partial modification. The segment at 140-161 is disordered; sequence ASHSERAIPVSREEKPSSAPSS. Residues 141 to 155 are compositionally biased toward basic and acidic residues; sequence SHSERAIPVSREEKP. Histidine 142 serves as a coordination point for Zn(2+). O-linked (GlcNAc) serine glycosylation occurs at serine 150.

This sequence belongs to the small heat shock protein (HSP20) family. Heteromer composed of three CRYAA and one CRYAB subunits. Inter-subunit bridging via zinc ions enhances stability, which is crucial as there is no protein turn over in the lens. Can also form homodimers and homotetramers (dimers of dimers) which serve as the building blocks of homooligomers. Within homooligomers, the zinc-binding motif is created from residues of 3 different molecules. His-88 and Glu-90 from one molecule are ligands of the zinc ion, and His-95 and His-142 residues from additional molecules complete the site with tetrahedral coordination geometry. Part of a complex required for lens intermediate filament formation composed of BFSP1, BFSP2 and CRYAA. Undergoes age-dependent proteolytical cleavage at the C-terminus.

The protein resides in the cytoplasm. Its subcellular location is the nucleus. Functionally, contributes to the transparency and refractive index of the lens. In its oxidized form (absence of intramolecular disulfide bond), acts as a chaperone, preventing aggregation of various proteins under a wide range of stress conditions. Required for the correct formation of lens intermediate filaments as part of a complex composed of BFSP1, BFSP2 and CRYAA. This is Alpha-crystallin A chain (CRYAA) from Galegeeska rufescens (East African rufous sengi).